The primary structure comprises 722 residues: Metal transporter cnnm-5 (722 aa).

Positions 1-17 (MSLFLFAIFQLALGSPG) are cleaved as a signal peptide. Topologically, residues 18-139 (APNGPNVPLQ…AAAAKYMGDE (122 aa)) are extracellular. 2 N-linked (GlcNAc...) asparagine glycosylation sites follow: Asn102 and Asn114. The region spanning 132-318 (AAKYMGDEIV…AQNEREKTIL (187 aa)) is the CNNM transmembrane domain. Residues 140–160 (IVFCFFCILMSAYASGMTLGY) traverse the membrane as a helical segment. Over 161 to 196 (MKFSMIDLNTMLKIAEGDAAKKRVRRIMHFRRRSTQ) the chain is Cytoplasmic. A helical transmembrane segment spans residues 197-217 (LVVTFSLFSSVFTVLFTTTCE). Residues 218–227 (KMLHGVSNED) lie on the Extracellular side of the membrane. Residues 228-248 (VLKMAVPALICLIFAEMIPQA) traverse the membrane as a helical segment. Topologically, residues 249–257 (VCNSKFGFN) are cytoplasmic. A helical membrane pass occupies residues 258-278 (LAASLWFVTVIIFFVTLPIAY). At 279 to 722 (PASLVLGRFL…ETTPFMEKQE (444 aa)) the chain is on the extracellular side. 3 N-linked (GlcNAc...) asparagine glycosylation sites follow: Asn320, Asn349, and Asn371. 2 consecutive CBS domains span residues 333–396 (MVPI…LIDE) and 413–473 (TVKF…KIDE). The interval 584–607 (SQRSSSTVNSQQHRQQTTDNSRST) is disordered. An N-linked (GlcNAc...) asparagine glycan is attached at Asn639. The tract at residues 686 to 722 (LNSRASTSTSTTPACRTPLSVDARSQDETTPFMEKQE) is disordered. The segment covering 688–703 (SRASTSTSTTPACRTP) has biased composition (low complexity).

It belongs to the ACDP family.

It localises to the cell membrane. Functionally, probable metal transporter. Probably acts redundantly with the other metal transport proteins cnnm-1, cnnm-2, cnnm-3 and cnnm-4 to regulate Mg(2+) homeostasis. This Caenorhabditis elegans protein is Metal transporter cnnm-5.